The following is a 291-amino-acid chain: Protease HtpX homolog (291 aa).

2 helical membrane passes run 4-24 (IALFLITNLAVMAVLGITASL) and 38-58 (LGALLGFAMVMGFGGAFISLL). His144 provides a ligand contact to Zn(2+). Glu145 is an active-site residue. His148 contacts Zn(2+). Helical transmembrane passes span 159-179 (LIQGVMNTFVVFLSRAIGYFI) and 197-217 (VTTVVLDLLLGLVAAMIVAWF). Residue Glu222 participates in Zn(2+) binding.

This sequence belongs to the peptidase M48B family. Requires Zn(2+) as cofactor.

The protein resides in the cell inner membrane. The chain is Protease HtpX homolog from Leptothrix cholodnii (strain ATCC 51168 / LMG 8142 / SP-6) (Leptothrix discophora (strain SP-6)).